The primary structure comprises 282 residues: Nucleotide-binding protein XCC2806 (282 aa).

Residue 5–12 (GLSGSGKS) coordinates ATP. 57–60 (DVRS) lines the GTP pocket.

It belongs to the RapZ-like family.

Its function is as follows. Displays ATPase and GTPase activities. This chain is Nucleotide-binding protein XCC2806, found in Xanthomonas campestris pv. campestris (strain ATCC 33913 / DSM 3586 / NCPPB 528 / LMG 568 / P 25).